We begin with the raw amino-acid sequence, 311 residues long: Dihydroorotate dehydrogenase A (fumarate) (311 aa).

FMN-binding positions include S19 and 43 to 44; that span reads KS. Substrate is bound by residues K43, 67–71, and N127; that span reads NSMGL. Residue N127 coordinates FMN. The active-site Nucleophile is the C130. The FMN site is built by K164 and V192. Residue 193–194 coordinates substrate; it reads NS. Residues G221, 249-250, and 271-272 contribute to the FMN site; these read GG and GT.

Belongs to the dihydroorotate dehydrogenase family. Type 1 subfamily. Homodimer. It depends on FMN as a cofactor.

It localises to the cytoplasm. The enzyme catalyses (S)-dihydroorotate + fumarate = orotate + succinate. It participates in pyrimidine metabolism; UMP biosynthesis via de novo pathway. In terms of biological role, catalyzes the conversion of dihydroorotate to orotate with fumarate as the electron acceptor. This chain is Dihydroorotate dehydrogenase A (fumarate) (pyrDA), found in Lactococcus lactis subsp. cremoris (Streptococcus cremoris).